The primary structure comprises 315 residues: Probable cell division protein WhiA (315 aa).

The H-T-H motif DNA-binding region spans 277 to 311; the sequence is SLQELGAMMPSGQISKSGVNHRLRKLNQIAEGYQQ.

The protein belongs to the WhiA family.

Functionally, involved in cell division and chromosome segregation. The chain is Probable cell division protein WhiA from Lacticaseibacillus paracasei (strain ATCC 334 / BCRC 17002 / CCUG 31169 / CIP 107868 / KCTC 3260 / NRRL B-441) (Lactobacillus paracasei).